The chain runs to 357 residues: tRNA pseudouridine synthase D (357 aa).

Catalysis depends on Asp76, which acts as the Nucleophile. A TRUD domain is found at 151–331; sequence GMPNYFGYQR…DGRYKDEEAQ (181 aa).

This sequence belongs to the pseudouridine synthase TruD family.

It catalyses the reaction uridine(13) in tRNA = pseudouridine(13) in tRNA. In terms of biological role, responsible for synthesis of pseudouridine from uracil-13 in transfer RNAs. This Sulfurimonas denitrificans (strain ATCC 33889 / DSM 1251) (Thiomicrospira denitrificans (strain ATCC 33889 / DSM 1251)) protein is tRNA pseudouridine synthase D.